Consider the following 148-residue polypeptide: Large ribosomal subunit protein uL22 (148 aa).

This sequence belongs to the universal ribosomal protein uL22 family. As to quaternary structure, part of the 50S ribosomal subunit.

In terms of biological role, this protein binds specifically to 23S rRNA; its binding is stimulated by other ribosomal proteins, e.g. L4, L17, and L20. It is important during the early stages of 50S assembly. It makes multiple contacts with different domains of the 23S rRNA in the assembled 50S subunit and ribosome. Functionally, the globular domain of the protein is located near the polypeptide exit tunnel on the outside of the subunit, while an extended beta-hairpin is found that lines the wall of the exit tunnel in the center of the 70S ribosome. This is Large ribosomal subunit protein uL22 from Thermosipho africanus (strain TCF52B).